Here is a 159-residue protein sequence, read N- to C-terminus: Major strawberry allergen Fra a 1-C (159 aa).

This sequence belongs to the BetVI family. In terms of assembly, monomer.

The chain is Major strawberry allergen Fra a 1-C from Fragaria ananassa (Strawberry).